The sequence spans 652 residues: uncharacterized protein (652 aa).

The span at 1 to 13 shows a compositional bias: basic and acidic residues; that stretch reads MSVTESKAKTERK. The segment at 1–21 is disordered; the sequence is MSVTESKAKTERKSSRKPAKT.

It belongs to the ParB family.

This is an uncharacterized protein from Escherichia coli (strain K12).